The chain runs to 462 residues: L-seryl-tRNA(Sec) selenium transferase (462 aa).

Lysine 292 carries the post-translational modification N6-(pyridoxal phosphate)lysine.

This sequence belongs to the SelA family. Pyridoxal 5'-phosphate is required as a cofactor.

It is found in the cytoplasm. The catalysed reaction is L-seryl-tRNA(Sec) + selenophosphate + H(+) = L-selenocysteinyl-tRNA(Sec) + phosphate. Its pathway is aminoacyl-tRNA biosynthesis; selenocysteinyl-tRNA(Sec) biosynthesis; selenocysteinyl-tRNA(Sec) from L-seryl-tRNA(Sec) (bacterial route): step 1/1. In terms of biological role, converts seryl-tRNA(Sec) to selenocysteinyl-tRNA(Sec) required for selenoprotein biosynthesis. The chain is L-seryl-tRNA(Sec) selenium transferase from Geobacter metallireducens (strain ATCC 53774 / DSM 7210 / GS-15).